A 310-amino-acid chain; its full sequence is Homeobox protein dsc-1 (310 aa).

The segment at residues 180 to 239 is a DNA-binding region (homeobox); it reads RRRFRTNFTELQSTFLEDSFKESHYPDHKAKKYMADFLKIPEDRITVWFQNRRAKWRRKE. The interval 262–310 is disordered; it reads CFSAQHPDDGPNAKHPNSFGIPNQPMSLDQFPMNTEQDFPEFPSLQEHQ. Polar residues predominate over residues 281-298; it reads GIPNQPMSLDQFPMNTEQ.

As to expression, expressed in the bilateral sensory neurons AWA, AWB, AWC, ASE, FLP and PVD. Also expressed in the enteric intestinal and anal depressor muscles.

It localises to the nucleus. It is found in the cell projection. The protein resides in the axon. The protein localises to the cytoplasm. Functionally, transcriptional regulator which plays a role in the expulsion step of defecation by controlling enteric muscle-specific expression of exp-1 which is required for enteric muscle contraction. Not required for exp-1 expression in the PDA neuron. Also involved in controlling the length of the defecation cycle. The protein is Homeobox protein dsc-1 of Caenorhabditis elegans.